Reading from the N-terminus, the 142-residue chain is Large ribosomal subunit protein uL13 (142 aa).

The protein belongs to the universal ribosomal protein uL13 family. Part of the 50S ribosomal subunit.

This protein is one of the early assembly proteins of the 50S ribosomal subunit, although it is not seen to bind rRNA by itself. It is important during the early stages of 50S assembly. The protein is Large ribosomal subunit protein uL13 of Stenotrophomonas maltophilia (strain K279a).